We begin with the raw amino-acid sequence, 543 residues long: Bifunctional purine biosynthesis protein PurH (543 aa).

An MGS-like domain is found at 5 to 151; it reads NHARPIRRAL…KNHKDVTIVV (147 aa).

Belongs to the PurH family.

The enzyme catalyses (6R)-10-formyltetrahydrofolate + 5-amino-1-(5-phospho-beta-D-ribosyl)imidazole-4-carboxamide = 5-formamido-1-(5-phospho-D-ribosyl)imidazole-4-carboxamide + (6S)-5,6,7,8-tetrahydrofolate. It catalyses the reaction IMP + H2O = 5-formamido-1-(5-phospho-D-ribosyl)imidazole-4-carboxamide. It participates in purine metabolism; IMP biosynthesis via de novo pathway; 5-formamido-1-(5-phospho-D-ribosyl)imidazole-4-carboxamide from 5-amino-1-(5-phospho-D-ribosyl)imidazole-4-carboxamide (10-formyl THF route): step 1/1. Its pathway is purine metabolism; IMP biosynthesis via de novo pathway; IMP from 5-formamido-1-(5-phospho-D-ribosyl)imidazole-4-carboxamide: step 1/1. The protein is Bifunctional purine biosynthesis protein PurH of Shewanella oneidensis (strain ATCC 700550 / JCM 31522 / CIP 106686 / LMG 19005 / NCIMB 14063 / MR-1).